The primary structure comprises 295 residues: Small ribosomal subunit biogenesis GTPase RsgA (295 aa).

One can recognise a CP-type G domain in the interval 68-228 (KNLLTKPHVA…VVDTPGFANL (161 aa)). GTP is bound by residues 117–120 (NKMD) and 170–178 (GLSGVGKSS). The Zn(2+) site is built by Cys-250, Cys-255, His-257, and Cys-263.

It belongs to the TRAFAC class YlqF/YawG GTPase family. RsgA subfamily. Monomer. Associates with 30S ribosomal subunit, binds 16S rRNA. Zn(2+) is required as a cofactor.

It localises to the cytoplasm. Functionally, one of several proteins that assist in the late maturation steps of the functional core of the 30S ribosomal subunit. Helps release RbfA from mature subunits. May play a role in the assembly of ribosomal proteins into the subunit. Circularly permuted GTPase that catalyzes slow GTP hydrolysis, GTPase activity is stimulated by the 30S ribosomal subunit. The chain is Small ribosomal subunit biogenesis GTPase RsgA from Thermotoga maritima (strain ATCC 43589 / DSM 3109 / JCM 10099 / NBRC 100826 / MSB8).